A 525-amino-acid chain; its full sequence is Phosphoenolpyruvate carboxykinase (ATP) (525 aa).

Substrate contacts are provided by arginine 52, tyrosine 186, and lysine 192. ATP is bound by residues lysine 192, histidine 211, and 228–236; that span reads GLSGTGKTT. The Mn(2+) site is built by lysine 192 and histidine 211. Aspartate 249 contacts Mn(2+). Residues glutamate 277, arginine 314, 433–434, and threonine 439 each bind ATP; that span reads RI. Arginine 314 is a substrate binding site.

Belongs to the phosphoenolpyruvate carboxykinase (ATP) family. Requires Mn(2+) as cofactor.

It localises to the cytoplasm. It catalyses the reaction oxaloacetate + ATP = phosphoenolpyruvate + ADP + CO2. It functions in the pathway carbohydrate biosynthesis; gluconeogenesis. Functionally, involved in the gluconeogenesis. Catalyzes the conversion of oxaloacetate (OAA) to phosphoenolpyruvate (PEP) through direct phosphoryl transfer between the nucleoside triphosphate and OAA. The sequence is that of Phosphoenolpyruvate carboxykinase (ATP) from Fusobacterium nucleatum subsp. nucleatum (strain ATCC 25586 / DSM 15643 / BCRC 10681 / CIP 101130 / JCM 8532 / KCTC 2640 / LMG 13131 / VPI 4355).